The chain runs to 505 residues: Glutamyl-tRNA(Gln) amidotransferase subunit A (505 aa).

Residues lysine 80 and serine 155 each act as charge relay system in the active site. Catalysis depends on serine 179, which acts as the Acyl-ester intermediate.

This sequence belongs to the amidase family. GatA subfamily. Heterotrimer of A, B and C subunits.

The enzyme catalyses L-glutamyl-tRNA(Gln) + L-glutamine + ATP + H2O = L-glutaminyl-tRNA(Gln) + L-glutamate + ADP + phosphate + H(+). Functionally, allows the formation of correctly charged Gln-tRNA(Gln) through the transamidation of misacylated Glu-tRNA(Gln) in organisms which lack glutaminyl-tRNA synthetase. The reaction takes place in the presence of glutamine and ATP through an activated gamma-phospho-Glu-tRNA(Gln). This chain is Glutamyl-tRNA(Gln) amidotransferase subunit A, found in Acidothermus cellulolyticus (strain ATCC 43068 / DSM 8971 / 11B).